Reading from the N-terminus, the 522-residue chain is Thiamine biosynthetic bifunctional enzyme TH1, chloroplastic (522 aa).

The N-terminal 36 residues, 1-36 (MNSLGGIRSWPANWRSTTASMTTTESVRKVPQVLTV), are a transit peptide targeting the chloroplast. 4-amino-2-methyl-5-(diphosphooxymethyl)pyrimidine-binding positions include 345–349 (QLREK) and Asn377. Mg(2+) is bound by residues Asp378 and Asp397. 4-amino-2-methyl-5-(diphosphooxymethyl)pyrimidine is bound at residue Ser416. 442–444 (TNT) is a 2-[(2R,5Z)-2-carboxy-4-methylthiazol-5(2H)-ylidene]ethyl phosphate binding site. Lys445 serves as a coordination point for 4-amino-2-methyl-5-(diphosphooxymethyl)pyrimidine. 2-[(2R,5Z)-2-carboxy-4-methylthiazol-5(2H)-ylidene]ethyl phosphate contacts are provided by residues Gly472 and 495–496 (VS).

Belongs to the thiamine-phosphate synthase family. Requires Mg(2+) as cofactor.

The protein resides in the plastid. Its subcellular location is the chloroplast. The enzyme catalyses 2-[(2R,5Z)-2-carboxy-4-methylthiazol-5(2H)-ylidene]ethyl phosphate + 4-amino-2-methyl-5-(diphosphooxymethyl)pyrimidine + 2 H(+) = thiamine phosphate + CO2 + diphosphate. It carries out the reaction 2-(2-carboxy-4-methylthiazol-5-yl)ethyl phosphate + 4-amino-2-methyl-5-(diphosphooxymethyl)pyrimidine + 2 H(+) = thiamine phosphate + CO2 + diphosphate. It catalyses the reaction 4-methyl-5-(2-phosphooxyethyl)-thiazole + 4-amino-2-methyl-5-(diphosphooxymethyl)pyrimidine + H(+) = thiamine phosphate + diphosphate. The catalysed reaction is 4-amino-5-hydroxymethyl-2-methylpyrimidine + ATP = 4-amino-2-methyl-5-(phosphooxymethyl)pyrimidine + ADP + H(+). Its pathway is cofactor biosynthesis; thiamine diphosphate biosynthesis; thiamine phosphate from 4-amino-2-methyl-5-diphosphomethylpyrimidine and 4-methyl-5-(2-phosphoethyl)-thiazole: step 1/1. It functions in the pathway cofactor biosynthesis; thiamine diphosphate biosynthesis; 4-amino-2-methyl-5-diphosphomethylpyrimidine from 5-amino-1-(5-phospho-D-ribosyl)imidazole: step 2/3. Essential for thiamine biosynthesis. Bifunctional enzyme that catalyzes the phosphorylation of hydroxymethylpyrimidine phosphate (HMP-P) to HMP-PP and condenses 4-methyl-5-(beta-hydroxyethyl)thiazole monophosphate (THZ-P) and 2-methyl-4-amino-5-hydroxymethyl pyrimidine pyrophosphate (HMP-PP) to form thiamine monophosphate (TMP). The polypeptide is Thiamine biosynthetic bifunctional enzyme TH1, chloroplastic (TH1) (Arabidopsis thaliana (Mouse-ear cress)).